Consider the following 263-residue polypeptide: uncharacterized protein (263 aa).

The protein localises to the mitochondrion. This is an uncharacterized protein from Schizosaccharomyces pombe (strain 972 / ATCC 24843) (Fission yeast).